A 322-amino-acid chain; its full sequence is Secreted RxLR effector protein RXLR-C17 (322 aa).

A signal peptide spans 1 to 25; sequence MREPAFSFRLHLFAAMILLVDVFSA. The RxLR-dEER signature appears at 43-62; that stretch reads RQLRARDSQAKNYVIRDEER. Asn-73 carries an N-linked (GlcNAc...) asparagine glycan.

Belongs to the RxLR effector family.

It localises to the secreted. It is found in the host cytoplasm. The protein resides in the host nucleus. In terms of biological role, secreted effector that suppresses pattern-triggered immunity (PTI) in plant host. The sequence is that of Secreted RxLR effector protein RXLR-C17 from Plasmopara halstedii (Downy mildew of sunflower).